The chain runs to 437 residues: Adenylosuccinate synthetase (437 aa).

GTP contacts are provided by residues G13–K19 and G41–T43. Residue D14 is the Proton acceptor of the active site. The Mg(2+) site is built by D14 and G41. IMP is bound by residues D14–K17, N39–H42, T130, R144, Q225, T240, and R310. H42 serves as the catalytic Proton donor. A306–R312 contributes to the substrate binding site. GTP contacts are provided by residues R312, K338–D340, and S421–G423.

The protein belongs to the adenylosuccinate synthetase family. In terms of assembly, homodimer. Mg(2+) serves as cofactor.

The protein localises to the cytoplasm. The enzyme catalyses IMP + L-aspartate + GTP = N(6)-(1,2-dicarboxyethyl)-AMP + GDP + phosphate + 2 H(+). Its pathway is purine metabolism; AMP biosynthesis via de novo pathway; AMP from IMP: step 1/2. Functionally, plays an important role in the de novo pathway of purine nucleotide biosynthesis. Catalyzes the first committed step in the biosynthesis of AMP from IMP. The protein is Adenylosuccinate synthetase of Psychromonas ingrahamii (strain DSM 17664 / CCUG 51855 / 37).